We begin with the raw amino-acid sequence, 167 residues long: Phosphopantetheine adenylyltransferase (167 aa).

A substrate-binding site is contributed by T9. ATP contacts are provided by residues 9–10 (TF) and H17. The substrate site is built by K41, L73, and R87. ATP-binding positions include 88-90 (GLR), E98, and 123-129 (YQFISGT).

This sequence belongs to the bacterial CoaD family. In terms of assembly, homohexamer. Mg(2+) serves as cofactor.

The protein localises to the cytoplasm. The enzyme catalyses (R)-4'-phosphopantetheine + ATP + H(+) = 3'-dephospho-CoA + diphosphate. It participates in cofactor biosynthesis; coenzyme A biosynthesis; CoA from (R)-pantothenate: step 4/5. In terms of biological role, reversibly transfers an adenylyl group from ATP to 4'-phosphopantetheine, yielding dephospho-CoA (dPCoA) and pyrophosphate. This chain is Phosphopantetheine adenylyltransferase, found in Ralstonia pickettii (strain 12J).